A 913-amino-acid chain; its full sequence is Ubiquitin carboxyl-terminal hydrolase 26 (913 aa).

A USP domain is found at 295–886 (HGLPNLGNTC…TGYIFFYMHN (592 aa)). The active-site Nucleophile is the cysteine 304. The span at 601–612 (HIGSDKESEQKK) shows a compositional bias: basic and acidic residues. Disordered stretches follow at residues 601–636 (HIGSDKESEQKKGQTVFKGASRRQQQKYLGKNSKPN) and 753–772 (QQALPQSFPKPGTQGHTKNL). Catalysis depends on histidine 841, which acts as the Proton acceptor.

The protein belongs to the peptidase C19 family. In terms of assembly, interacts with RING1. In terms of tissue distribution, expressed in testis.

Its subcellular location is the nucleus. The protein resides in the cytoplasm. It localises to the cytoskeleton. The protein localises to the flagellum axoneme. It carries out the reaction Thiol-dependent hydrolysis of ester, thioester, amide, peptide and isopeptide bonds formed by the C-terminal Gly of ubiquitin (a 76-residue protein attached to proteins as an intracellular targeting signal).. Its function is as follows. Deubiquitinase regulating several biological processes through the deubiquitination of components of these processes. Involved in somatic cell reprogramming through the 'Lys-48'-linked deubiquitination and stabilization of CBX4 and CBX6, two components of the polycomb-repressive complex 1 (PRC1). Also deubiquitinates and probably stabilizes the androgen receptor (AR), regulating the androgen receptor signaling pathway. May play a role in spermatogenesis. The sequence is that of Ubiquitin carboxyl-terminal hydrolase 26 from Homo sapiens (Human).